The chain runs to 342 residues: Polygalacturonase inhibitor 1 (342 aa).

An N-terminal signal peptide occupies residues 1-29 (MTQFNIPVTMSSSLSIILVILVSLRTALS). Intrachain disulfides connect Cys-32-Cys-62 and Cys-63-Cys-72. A glycan (N-linked (GlcNAc...) asparagine) is linked at Asn-64. LRR repeat units lie at residues 82–107 (NNLD…LPYL), 108–132 (NFLY…LTQL), 133–156 (HYLY…IKTL), 157–180 (VTLD…LPNL), 181–205 (GGIT…SKLF), 206–228 (TAMT…NLNL), 229–252 (AFVD…DKNT), 253–275 (KKIH…SKNL), 276–299 (NGLD…LKFL), and 300–319 (QSLN…GGNL). An N-linked (GlcNAc...) asparagine glycan is attached at Asn-141. Asn-303 carries an N-linked (GlcNAc...) asparagine glycan. Disulfide bonds link Cys-310–Cys-332 and Cys-334–Cys-341.

It belongs to the polygalacturonase-inhibiting protein family.

It is found in the secreted. It localises to the cell wall. The protein localises to the membrane. Inhibitor of fungal polygalacturonase. It is an important factor for plant resistance to phytopathogenic fungi. Substrate preference is polygalacturonase (PG) from A.niger &gt;&gt; PG of F.oxysporum, A.solani or B.cinerea. Not active on PG from F.moniliforme. This Phaseolus vulgaris (Kidney bean) protein is Polygalacturonase inhibitor 1 (PGIP1).